Reading from the N-terminus, the 22-residue chain is Unknown protein 10 (22 aa).

This Pseudotsuga menziesii (Douglas-fir) protein is Unknown protein 10.